Here is a 410-residue protein sequence, read N- to C-terminus: LL-diaminopimelate aminotransferase (410 aa).

2 residues coordinate substrate: tyrosine 15 and glycine 42. Pyridoxal 5'-phosphate contacts are provided by residues tyrosine 72, 108 to 109 (AK), tyrosine 132, asparagine 188, tyrosine 219, and 247 to 249 (SFS). 3 residues coordinate substrate: lysine 109, tyrosine 132, and asparagine 188. Position 250 is an N6-(pyridoxal phosphate)lysine (lysine 250). The pyridoxal 5'-phosphate site is built by arginine 258 and asparagine 293. Substrate-binding residues include asparagine 293 and arginine 389.

Belongs to the class-I pyridoxal-phosphate-dependent aminotransferase family. LL-diaminopimelate aminotransferase subfamily. As to quaternary structure, homodimer. The cofactor is pyridoxal 5'-phosphate.

It catalyses the reaction (2S,6S)-2,6-diaminopimelate + 2-oxoglutarate = (S)-2,3,4,5-tetrahydrodipicolinate + L-glutamate + H2O + H(+). It participates in amino-acid biosynthesis; L-lysine biosynthesis via DAP pathway; LL-2,6-diaminopimelate from (S)-tetrahydrodipicolinate (aminotransferase route): step 1/1. Its function is as follows. Involved in the synthesis of meso-diaminopimelate (m-DAP or DL-DAP), required for both lysine and peptidoglycan biosynthesis. Catalyzes the direct conversion of tetrahydrodipicolinate to LL-diaminopimelate. In Bacteroides thetaiotaomicron (strain ATCC 29148 / DSM 2079 / JCM 5827 / CCUG 10774 / NCTC 10582 / VPI-5482 / E50), this protein is LL-diaminopimelate aminotransferase.